The chain runs to 296 residues: Glycine--tRNA ligase alpha subunit (296 aa).

This sequence belongs to the class-II aminoacyl-tRNA synthetase family. Tetramer of two alpha and two beta subunits.

The protein resides in the cytoplasm. The catalysed reaction is tRNA(Gly) + glycine + ATP = glycyl-tRNA(Gly) + AMP + diphosphate. In Prochlorococcus marinus (strain SARG / CCMP1375 / SS120), this protein is Glycine--tRNA ligase alpha subunit.